A 507-amino-acid polypeptide reads, in one-letter code: Wax ester synthase/diacylglycerol acyltransferase 5 (507 aa).

Residues 1 to 211 (MEIKIRRRRG…LKTSSRCYSR (211 aa)) are Cytoplasmic-facing. The Proton acceptor role is filled by H161. Residues 212 to 232 (FFWLVMVLWSAALLVLNTVCD) traverse the membrane as a helical segment. At 233–507 (ALEFIATALF…VVVQERTSTQ (275 aa)) the chain is on the lumenal side. 2 N-linked (GlcNAc...) asparagine glycosylation sites follow: N314 and N421.

In the N-terminal section; belongs to the long-chain O-acyltransferase family. As to expression, mostly expressed in flowers and siliques.

Its subcellular location is the cell membrane. It localises to the endoplasmic reticulum membrane. It catalyses the reaction a long chain fatty alcohol + a fatty acyl-CoA = a wax ester + CoA. It carries out the reaction an acyl-CoA + a 1,2-diacyl-sn-glycerol = a triacyl-sn-glycerol + CoA. It participates in glycerolipid metabolism; triacylglycerol biosynthesis. It functions in the pathway lipid metabolism. Bifunctional wax ester synthase/diacylglycerol acyltransferase. Involved in cuticular wax biosynthesis. This Arabidopsis thaliana (Mouse-ear cress) protein is Wax ester synthase/diacylglycerol acyltransferase 5.